The following is a 292-amino-acid chain: MKYYFSSIGIVGHPRYDSALNTHKLLHSWLVNKGYNVIIENKVAHKLRLKNINFDSLANIGKKCDLAIVVGGDGNMLCAARILSCYNIKIIGINRGNLGFLTDLNPDTAFQQLYNVLSGEYFIEKRFLLEVKIVKENGTALINTAINEVVLHAGHVAHMIDFEVYINNEFAFSQRSDGLIISTPTGSTGYSLSAGGPILVSSLEAMVLIPMFPHTLSSRPLVINSTSIVYLKFKKHIHSELKISCDSQVILPLNSKDNIFVKKSKKFLCLLHPKNYNYFNVLSSKLNWSKRF.

Residue Asp73 is the Proton acceptor of the active site. Residues 73 to 74 (DG), 147 to 148 (NE), His158, Arg175, Asp177, 188 to 193 (TGYSLS), and Gln248 each bind NAD(+).

Belongs to the NAD kinase family. It depends on a divalent metal cation as a cofactor.

Its subcellular location is the cytoplasm. The enzyme catalyses NAD(+) + ATP = ADP + NADP(+) + H(+). Its function is as follows. Involved in the regulation of the intracellular balance of NAD and NADP, and is a key enzyme in the biosynthesis of NADP. Catalyzes specifically the phosphorylation on 2'-hydroxyl of the adenosine moiety of NAD to yield NADP. The chain is NAD kinase from Buchnera aphidicola subsp. Baizongia pistaciae (strain Bp).